Here is a 299-residue protein sequence, read N- to C-terminus: MAPTAKTNKGDTKTAAAKPAEKKAAPAAAAAKGKVEKPKAEAAKPAAAAAKNVKKASEAAKDVKAAAAAAKPAAAKPAAAKPAAASKDAGKKAPAAAAPKKDAKAAAAPAPAKAAPAKKAASTPAAAPPAKKAAPAKAAAPAAAAPAPAAAAPAVAKPAPKPKAKAAPAPSKVVKKNVLRGKGQKKKKVSLRFTIDCTNIAEDSIMDVADFEKYIKARLKVNGKVNNLGNNVTFERSKLKLIVSSDVHFSKAYLKYLTKKYLKKNSLRDWIRVVANEKDSYELRYFRISSNDDEDDDAE.

Disordered regions lie at residues M1–A142 and V155–V178. Composition is skewed to basic and acidic residues over residues G33 to A42 and K55 to K64. Low complexity-rich tracts occupy residues A65–A98 and A105–A142.

The protein belongs to the eukaryotic ribosomal protein eL22 family.

This Drosophila melanogaster (Fruit fly) protein is Large ribosomal subunit protein eL22 (RpL22).